The chain runs to 1150 residues: Solute carrier family 12 member 6 (1150 aa).

The segment at 1–108 is disordered; that stretch reads MHPPEATTKM…GEHSQLLDDG (108 aa). The Cytoplasmic portion of the chain corresponds to 1–135; it reads MHPPEATTKM…DEYFDKNLAL (135 aa). A compositionally biased stretch (low complexity) spans 28-45; that stretch reads LSDTSPDLSSRSSSRVRF. Phosphoserine is present on S32. A compositionally biased stretch (polar residues) spans 80 to 101; sequence DRTSNPQDVTEDPSQNSITGEH. S120 is modified (phosphoserine). Residues 136–158 form a discontinuously helical membrane-spanning segment; it reads FEEEMDTRPKVSSLLNRMANYTN. Residues S147 and S148 each coordinate K(+). S148 is modified (phosphoserine). N151 contacts chloride. Over 159–165 the chain is Extracellular; the sequence is LTQGAKE. Positions 161–181 are disordered; that stretch reads QGAKEHEEAENITEGKKKPTK. Positions 163-177 are enriched in basic and acidic residues; sequence AKEHEEAENITEGKK. The chain crosses the membrane as a helical span at residues 166 to 188; sequence HEEAENITEGKKKPTKSPQMGTF. Over 189-211 the chain is Cytoplasmic; the sequence is MGVYLPCLQNIFGVILFLRLTWV. A helical membrane pass occupies residues 212 to 245; the sequence is VGTAGILQAFAIVLICCCCTMLTAISMSAIATNG. Residues 246–263 lie on the Extracellular side of the membrane; that stretch reads VVPAGGSYFMISRALGPE. Helical transmembrane passes span 264–287 and 288–316; these read FGGA…ILGA and IEIF…AMLN. Position 283 (Y283) interacts with K(+). Topologically, residues 317-433 are extracellular; the sequence is NMRVYGTAFL…FVHNNVISIQ (117 aa). A disulfide bridge links C375 with C390. N-linked (GlcNAc...) asparagine glycans are attached at residues N379, N398, N411, and N417. C410 and C420 are joined by a disulfide. The chain crosses the membrane as a helical span at residues 434–454; that stretch reads GIPGLASGIITENLWSNYLPK. Residues I443, T444, and N446 each coordinate K(+). 2 residues coordinate chloride: I443 and T444. Chloride is bound by residues L447 and W448. Over 455–464 the chain is Cytoplasmic; it reads GEIIEKPSAK. The chain crosses the membrane as a helical span at residues 465-487; the sequence is SSDVLGNLNHEYVLADITTSFTL. The Extracellular segment spans residues 488 to 518; that stretch reads LVGIFFPSVTGIMAGSNRSGDLKDAQKSIPI. T497 is a K(+) binding site. A helical membrane pass occupies residues 519-545; that stretch reads GTILAILTTSFVYLSNVVLFGACIEGV. The Cytoplasmic portion of the chain corresponds to 546 to 568; that stretch reads VLRDKFGDAVKGNLVVGTLSWPS. 2 helical membrane passes run 569–589 and 590–612; these read PWVI…QSLT and GAPR…VFGH. I603 serves as a coordination point for chloride. Over 613–629 the chain is Cytoplasmic; the sequence is SKANGEPTWALLLTAAI. The next 2 helical transmembrane spans lie at 630–649 and 650–665; these read AELG…LSMF and FLMC…ALQT. A chloride-binding site is contributed by Y654. At 666-1150 the chain is on the cytoplasmic side; the sequence is LLRTPNWRPR…GGSEVITIYS (485 aa). The scissor helix stretch occupies residues 682–691; that stretch reads ALSFMGMSIC. S736 bears the Phosphoserine mark. T778 bears the Phosphothreonine mark. S981 carries the phosphoserine modification. T991 carries the phosphothreonine modification. S1023, S1029, and S1032 each carry phosphoserine. Position 1048 is a phosphothreonine (T1048). Y1121 carries the phosphotyrosine modification.

Belongs to the SLC12A transporter family. K/Cl co-transporter subfamily. As to quaternary structure, homodimer; adopts a domain-swap conformation at the scissor helices connecting the transmembrane domain and C-terminal domain. Heterodimer with K-Cl cotransporter SLC12A5. Interacts (via C-terminus) with CKB; the interaction may be required for potassium-chloride cotransport activity. In terms of processing, phosphorylated, phosphorylation regulates transporter activity. Phosphorylated at Thr-991 and Thr-1048 by OXSR1/OSR1 and STK39/SPAK downstream of WNK kinases (WNK1, WNK2, WNK3 or WNK4), inhibiting the potassium-chloride cotransport activity. N-glycosylated. As to expression, expressed in hippocampus and corpus callosum (at protein level). Highly expressed throughout the brain and detected at lower levels in kidney. Highly expressed in highly myelinated white matter of the brain, but not in gray matter. Detected in the corpus callosum, in packed cell layers of the hippocampus and in Purkinje neurons within the cerebellum. Highly expressed in white matter in the spinal cord, but not in dorsal root ganglia or sciatic nerve. Colocalizes with the oligodendrocyte marker CNP. Expressed in hippocampus in CA1, and to a lesser extent CA3 pyramidal cells. Also expressed in cortex, mostly in large neurons and in the large cerebellar Purkinje cells. Highly expressed in kidney, but not detected in brain.

It localises to the cell membrane. Its subcellular location is the basolateral cell membrane. It carries out the reaction K(+)(in) + chloride(in) = K(+)(out) + chloride(out). With respect to regulation, inhibited following phosphorylation by OXSR1/OSR1 and STK39/SPAK: phosphorylation takes place downstream of WNK kinases (WNK1, WNK2, WNK3 or WNK4) in response to hyperosmotic stress and subsequent cell shrinkage. In terms of biological role, mediates electroneutral potassium-chloride cotransport when activated by cell swelling. May contribute to cell volume homeostasis in single cells. Functionally, mediates electroneutral potassium-chloride cotransport when activated by cell swelling. May contribute to cell volume homeostasis in single cells. The sequence is that of Solute carrier family 12 member 6 (Slc12a6) from Mus musculus (Mouse).